We begin with the raw amino-acid sequence, 430 residues long: Adenylosuccinate synthetase (430 aa).

Residues 12-18 (GDEGKGK) and 40-42 (GHT) contribute to the GTP site. Residue Asp13 is the Proton acceptor of the active site. 2 residues coordinate Mg(2+): Asp13 and Gly40. IMP-binding positions include 13–16 (DEGK), 38–41 (NAGH), Thr130, Arg144, Gln224, Thr239, and Arg303. Residue His41 is the Proton donor of the active site. Position 299–305 (299–305 (VNTGRKR)) interacts with substrate. GTP-binding positions include Arg305, 331–333 (KLD), and 413–415 (STS).

This sequence belongs to the adenylosuccinate synthetase family. In terms of assembly, homodimer. The cofactor is Mg(2+).

Its subcellular location is the cytoplasm. The enzyme catalyses IMP + L-aspartate + GTP = N(6)-(1,2-dicarboxyethyl)-AMP + GDP + phosphate + 2 H(+). It functions in the pathway purine metabolism; AMP biosynthesis via de novo pathway; AMP from IMP: step 1/2. Its function is as follows. Plays an important role in the de novo pathway of purine nucleotide biosynthesis. Catalyzes the first committed step in the biosynthesis of AMP from IMP. In Nitrobacter hamburgensis (strain DSM 10229 / NCIMB 13809 / X14), this protein is Adenylosuccinate synthetase.